Consider the following 91-residue polypeptide: Histone H1, sperm (91 aa).

The segment at 1 to 25 (PGSPQKRAASPRKSPRKGSPKKSPM) is disordered. Residues 9-20 (ASPRKSPRKGSP) show a composition bias toward basic residues. One can recognise an H15 domain in the interval 18 to 91 (GSPKKSPMIR…TGATGRFRVG (74 aa)).

The protein belongs to the histone H1/H5 family.

It is found in the nucleus. It localises to the chromosome. Its function is as follows. Histones H1 are necessary for the condensation of nucleosome chains into higher-order structures. This is Histone H1, sperm from Sphaerechinus granularis (Purple sea urchin).